Consider the following 628-residue polypeptide: MALVSAVPLNSKLCLCRTLFGFSHELKAIHSTVPNLGMCRGGKSIAPSMSMSSTTSVSNEDEAPRRIAGHHSNLWDDDSIASLSTSYEAPSYREGADRLIGEVKNIFDLMSVEDGVFTSPLSDLHHRLWMVDSVERLGIDRHFKDEINSALDHVYSYWTEKGIGRGREGGVTDLNSTALGLRTLRLHGYTVSSHVLDHLKNEKGQFTCSAIQTEGEIRDVLNLFRASLIAFPGEKIMEAAEIFSTMYLKDALQKIPPSGLSQEIEYLLEFGWHTNLPRMETRMYIDVFGEDTTFETPYLIREKLLELAKLEFNIFHSLVKRELQSLSRWWKDYGFPEITFSRHRHVEYYTLAACIANDPKHSAFRLGFGKISHMITILDDIYDTFGTMEELELLTAAFKRWDPSSIECLPDYMKGVYMAVYDNINEMAREAQKIQGWDTVSYARKSWEAFIGAYIQEAKWISSGYLPTFDEYLENGKVSFGSRITTLEPMLTLGFPLPPRILQEIDFPSKFNDLTCAILRLKGDTQCYKADRARGEEASAVSCYMKDHPGITEEDAVNQVNAMVDNLTKELNWELLRPDSGVPISYKKVAFDICRVFHYGYKYRDGFSVASVEIKNLVTRTVVETVPL.

Residues 1-18 constitute a chloroplast transit peptide; the sequence is MALVSAVPLNSKLCLCRT. The Mg(2+) site is built by Asp-379, Asp-383, and Asp-531. The DDXXD motif signature appears at 379-383; the sequence is DDIYD.

The protein belongs to the terpene synthase family. Tpsd subfamily. Mg(2+) is required as a cofactor. The cofactor is Mn(2+).

It localises to the plastid. It is found in the chloroplast. It carries out the reaction (2E)-geranyl diphosphate = (1R,5R)-alpha-pinene + diphosphate. It participates in terpene metabolism; oleoresin biosynthesis. The protein operates within secondary metabolite biosynthesis; terpenoid biosynthesis. Its function is as follows. Monoterpene synthase (TPS) involved in the biosynthesis of monoterpene natural products included in conifer oleoresin secretions and volatile emissions; these compounds contribute to biotic and abiotic stress defense against herbivores and pathogens. Catalyzes the conversion of (2E)-geranyl diphosphate (GPP) to (+)-alpha-pinene. The sequence is that of (+)-alpha pinene synthase 1, chloroplastic from Pinus banksiana (Jack pine).